Here is a 194-residue protein sequence, read N- to C-terminus: Segregation and condensation protein B (194 aa).

The protein belongs to the ScpB family. In terms of assembly, homodimer. Homodimerization may be required to stabilize the binding of ScpA to the Smc head domains. Component of a cohesin-like complex composed of ScpA, ScpB and the Smc homodimer, in which ScpA and ScpB bind to the head domain of Smc. The presence of the three proteins is required for the association of the complex with DNA.

It localises to the cytoplasm. Participates in chromosomal partition during cell division. May act via the formation of a condensin-like complex containing Smc and ScpA that pull DNA away from mid-cell into both cell halves. This chain is Segregation and condensation protein B, found in Brevibacillus brevis (strain 47 / JCM 6285 / NBRC 100599).